We begin with the raw amino-acid sequence, 377 residues long: Naringenin,2-oxoglutarate 3-dioxygenase (377 aa).

Positions 193 to 297 (CVDMDQKVVV…RLSIATFQNP (105 aa)) constitute a Fe2OG dioxygenase domain. Fe cation contacts are provided by His220, Asp222, and His278. Position 288 (Arg288) interacts with 2-oxoglutarate.

Belongs to the iron/ascorbate-dependent oxidoreductase family. Requires Fe(2+) as cofactor. It depends on L-ascorbate as a cofactor.

The catalysed reaction is a (2S)-flavan-4-one + 2-oxoglutarate + O2 = a (2R,3R)-dihydroflavonol + succinate + CO2. Its pathway is secondary metabolite biosynthesis; flavonoid biosynthesis. Functionally, catalyzes the 3-beta-hydroxylation of 2S-flavanones to 2R,3R-dihydroflavonols which are intermediates in the biosynthesis of flavonols, anthocyanidins, catechins and proanthocyanidins in plants. The polypeptide is Naringenin,2-oxoglutarate 3-dioxygenase (Hordeum vulgare (Barley)).